The following is a 100-amino-acid chain: NADH-quinone oxidoreductase subunit K (100 aa).

3 consecutive transmembrane segments (helical) span residues 4-24 (TSYY…GVLL), 29-49 (IVIF…LVAF), and 61-81 (IVFF…ALLV).

This sequence belongs to the complex I subunit 4L family. NDH-1 is composed of 14 different subunits. Subunits NuoA, H, J, K, L, M, N constitute the membrane sector of the complex.

It is found in the cell membrane. It catalyses the reaction a quinone + NADH + 5 H(+)(in) = a quinol + NAD(+) + 4 H(+)(out). NDH-1 shuttles electrons from NADH, via FMN and iron-sulfur (Fe-S) centers, to quinones in the respiratory chain. The immediate electron acceptor for the enzyme in this species is believed to be ubiquinone. Couples the redox reaction to proton translocation (for every two electrons transferred, four hydrogen ions are translocated across the cytoplasmic membrane), and thus conserves the redox energy in a proton gradient. This Chloroflexus aggregans (strain MD-66 / DSM 9485) protein is NADH-quinone oxidoreductase subunit K.